The primary structure comprises 88 residues: EMBRYO SURROUNDING FACTOR 1-like protein 11 (88 aa).

The N-terminal stretch at 1–23 is a signal peptide; sequence MISSSHFAIFCIILVSLFALQQY. 4 cysteine pairs are disulfide-bonded: cysteine 44–cysteine 59, cysteine 49–cysteine 78, cysteine 57–cysteine 74, and cysteine 60–cysteine 67.

This sequence belongs to the MEG family. Expressed in stems.

In Arabidopsis thaliana (Mouse-ear cress), this protein is EMBRYO SURROUNDING FACTOR 1-like protein 11 (ESFL11).